The following is a 532-amino-acid chain: Cytochrome P450 714B2 (532 aa).

The Lumenal portion of the chain corresponds to 1–2; that stretch reads ME. The helical; Signal-anchor for type III membrane protein transmembrane segment at 3 to 23 threads the bilayer; that stretch reads VGMVVVVAAKVLVSLWCVGAC. Topologically, residues 24 to 532 are cytoplasmic; that stretch reads CLAAYLYRVV…LTRVQGAYRH (509 aa). Cysteine 474 provides a ligand contact to heme.

This sequence belongs to the cytochrome P450 family. Heme is required as a cofactor. As to expression, highly expressed in shoot, spikelet and uppermost internode. Detected in roots, leaves and anthers.

It is found in the membrane. Catalyzes the 13-hydroxylation of gibberellins (GAs). Determines the ratio of GA4 and GA1. Converts GA12 into GA53. This chain is Cytochrome P450 714B2 (CYP714B2), found in Oryza sativa subsp. japonica (Rice).